The chain runs to 526 residues: Peptide chain release factor 3 (526 aa).

In terms of domain architecture, tr-type G spans 8–277 (NKRRTFAIIS…GLTEWAPKPQ (270 aa)). Residues 17 to 24 (SHPDAGKT), 85 to 89 (DTPGH), and 139 to 142 (NKLD) each bind GTP.

Belongs to the TRAFAC class translation factor GTPase superfamily. Classic translation factor GTPase family. PrfC subfamily.

Its subcellular location is the cytoplasm. Increases the formation of ribosomal termination complexes and stimulates activities of RF-1 and RF-2. It binds guanine nucleotides and has strong preference for UGA stop codons. It may interact directly with the ribosome. The stimulation of RF-1 and RF-2 is significantly reduced by GTP and GDP, but not by GMP. The polypeptide is Peptide chain release factor 3 (Haemophilus ducreyi (strain 35000HP / ATCC 700724)).